A 246-amino-acid polypeptide reads, in one-letter code: 1-(5-phosphoribosyl)-5-[(5-phosphoribosylamino)methylideneamino] imidazole-4-carboxamide isomerase (246 aa).

The active-site Proton acceptor is the aspartate 8. Catalysis depends on aspartate 129, which acts as the Proton donor.

The protein belongs to the HisA/HisF family.

Its subcellular location is the cytoplasm. It catalyses the reaction 1-(5-phospho-beta-D-ribosyl)-5-[(5-phospho-beta-D-ribosylamino)methylideneamino]imidazole-4-carboxamide = 5-[(5-phospho-1-deoxy-D-ribulos-1-ylimino)methylamino]-1-(5-phospho-beta-D-ribosyl)imidazole-4-carboxamide. It participates in amino-acid biosynthesis; L-histidine biosynthesis; L-histidine from 5-phospho-alpha-D-ribose 1-diphosphate: step 4/9. The polypeptide is 1-(5-phosphoribosyl)-5-[(5-phosphoribosylamino)methylideneamino] imidazole-4-carboxamide isomerase (Nitrobacter hamburgensis (strain DSM 10229 / NCIMB 13809 / X14)).